The chain runs to 237 residues: Phosphoribosylaminoimidazole-succinocarboxamide synthase (237 aa).

This sequence belongs to the SAICAR synthetase family.

The enzyme catalyses 5-amino-1-(5-phospho-D-ribosyl)imidazole-4-carboxylate + L-aspartate + ATP = (2S)-2-[5-amino-1-(5-phospho-beta-D-ribosyl)imidazole-4-carboxamido]succinate + ADP + phosphate + 2 H(+). It functions in the pathway purine metabolism; IMP biosynthesis via de novo pathway; 5-amino-1-(5-phospho-D-ribosyl)imidazole-4-carboxamide from 5-amino-1-(5-phospho-D-ribosyl)imidazole-4-carboxylate: step 1/2. This Pseudomonas fluorescens (strain SBW25) protein is Phosphoribosylaminoimidazole-succinocarboxamide synthase.